We begin with the raw amino-acid sequence, 194 residues long: ATP-dependent Clp protease proteolytic subunit (194 aa).

The active-site Nucleophile is Ser-97. Residue His-122 is part of the active site.

It belongs to the peptidase S14 family. As to quaternary structure, fourteen ClpP subunits assemble into 2 heptameric rings which stack back to back to give a disk-like structure with a central cavity, resembling the structure of eukaryotic proteasomes.

The protein localises to the cytoplasm. The catalysed reaction is Hydrolysis of proteins to small peptides in the presence of ATP and magnesium. alpha-casein is the usual test substrate. In the absence of ATP, only oligopeptides shorter than five residues are hydrolyzed (such as succinyl-Leu-Tyr-|-NHMec, and Leu-Tyr-Leu-|-Tyr-Trp, in which cleavage of the -Tyr-|-Leu- and -Tyr-|-Trp bonds also occurs).. In terms of biological role, cleaves peptides in various proteins in a process that requires ATP hydrolysis. Has a chymotrypsin-like activity. Plays a major role in the degradation of misfolded proteins. This is ATP-dependent Clp protease proteolytic subunit from Lactobacillus delbrueckii subsp. bulgaricus (strain ATCC BAA-365 / Lb-18).